An 835-amino-acid polypeptide reads, in one-letter code: Prickle-like protein 1-A (835 aa).

The PET domain maps to 14–122 (FGCQRSSTSD…NIKMLSRAVM (109 aa)). LIM zinc-binding domains are found at residues 124 to 188 (ATCE…ELLK), 189 to 249 (PRCS…HYAE), and 250 to 313 (YCES…EDVH). Disordered stretches follow at residues 312-346 (VHAS…ADQC), 426-455 (LFQQ…QRNN), 603-706 (CQEK…RKRS), and 769-835 (CSSS…CIIS). 3 stretches are compositionally biased toward basic and acidic residues: residues 432 to 453 (EDNR…DLQR), 603 to 614 (CQEKPPPEEKPM), and 646 to 655 (EIRRPPMSER). Basic residues-rich tracts occupy residues 669–683 (RPHH…KSRK) and 819–835 (SKSK…CIIS). Cys832 is subject to Cysteine methyl ester. Residue Cys832 is the site of S-farnesyl cysteine attachment. Positions 833–835 (IIS) are cleaved as a propeptide — removed in mature form.

It belongs to the prickle / espinas / testin family. Interacts with dvl2/dsh and mapk8/jnk1. Expressed in the dorsal marginal zone of early gastrulae (stage 10). As gastrulation proceeds, expression expands to include the lateral and ventral marginal zones, excluding the few rows of cells above the blastopore lip. Expression moves dorsally with gastrulation cell movements, and by the end of gastrulation expression is seen in dorsal mesoderm and posterior but not anterior neural ectoderm. Expression becomes down-regulated in mesoderm but remains strong in posterior ectoderm through the neurula stages. During tailbud stages, expressed in the pronephric duct, tailbud, tailtip and forming somites. In the most posterior regions, expressed in notochord and in the floorplate of the neural tube with weak expression in the roofplate. At stage 30, expressed in a complex pattern in the head including strong expression in the lens and otic vesicle.

The protein localises to the cell membrane. Functionally, acts in a planar cell polarity (PCP) complex; polarization along the apical/basal axis of epithelial cells. Regulates the polarized assembly of fibronectrin on the surface of the mesoderm during gastrulation. Essential for gastrulation cell movements, cooperating with dvl2/dsh to activate jnk. Acts together with tes to control axial elongation. The polypeptide is Prickle-like protein 1-A (prickle1-a) (Xenopus laevis (African clawed frog)).